The following is a 354-amino-acid chain: Methionine import ATP-binding protein MetN (354 aa).

Residues 8 to 250 enclose the ABC transporter domain; sequence LDHIDITFRQ…PKEALTQEFI (243 aa). 42-49 provides a ligand contact to ATP; sequence GYSGAGKS.

Belongs to the ABC transporter superfamily. Methionine importer (TC 3.A.1.24) family. The complex is composed of two ATP-binding proteins (MetN), two transmembrane proteins (MetI) and a solute-binding protein (MetQ).

It localises to the cell membrane. It carries out the reaction L-methionine(out) + ATP + H2O = L-methionine(in) + ADP + phosphate + H(+). The enzyme catalyses D-methionine(out) + ATP + H2O = D-methionine(in) + ADP + phosphate + H(+). Part of the ABC transporter complex MetNIQ involved in methionine import. Responsible for energy coupling to the transport system. This is Methionine import ATP-binding protein MetN from Streptococcus pyogenes serotype M3 (strain ATCC BAA-595 / MGAS315).